A 197-amino-acid polypeptide reads, in one-letter code: uncharacterized protein (197 aa).

Residues 1–30 (MSTYIIINIALLIAIVALIFFLSKKTKSEA) form the signal peptide.

This is an uncharacterized protein from Acanthamoeba polyphaga (Amoeba).